Consider the following 231-residue polypeptide: 5'-methylthioadenosine/S-adenosylhomocysteine nucleosidase (231 aa).

Residue E13 is the Proton acceptor of the active site. Residues G79, M154, and 175–176 (ME) each bind substrate. Residue D199 is the Proton donor of the active site.

This sequence belongs to the PNP/UDP phosphorylase family. MtnN subfamily.

It carries out the reaction S-adenosyl-L-homocysteine + H2O = S-(5-deoxy-D-ribos-5-yl)-L-homocysteine + adenine. The catalysed reaction is S-methyl-5'-thioadenosine + H2O = 5-(methylsulfanyl)-D-ribose + adenine. The enzyme catalyses 5'-deoxyadenosine + H2O = 5-deoxy-D-ribose + adenine. Its pathway is amino-acid biosynthesis; L-methionine biosynthesis via salvage pathway; S-methyl-5-thio-alpha-D-ribose 1-phosphate from S-methyl-5'-thioadenosine (hydrolase route): step 1/2. Its function is as follows. Catalyzes the irreversible cleavage of the glycosidic bond in both 5'-methylthioadenosine (MTA) and S-adenosylhomocysteine (SAH/AdoHcy) to adenine and the corresponding thioribose, 5'-methylthioribose and S-ribosylhomocysteine, respectively. Also cleaves 5'-deoxyadenosine, a toxic by-product of radical S-adenosylmethionine (SAM) enzymes, into 5-deoxyribose and adenine. The protein is 5'-methylthioadenosine/S-adenosylhomocysteine nucleosidase of Marinomonas sp. (strain MWYL1).